Reading from the N-terminus, the 368-residue chain is 3-dehydroquinate synthase (368 aa).

This sequence belongs to the archaeal-type DHQ synthase family.

The catalysed reaction is 2-amino-2,3,7-trideoxy-D-lyxo-hept-6-ulosonate + NAD(+) + H2O = 3-dehydroquinate + NH4(+) + NADH + H(+). Its function is as follows. Catalyzes the oxidative deamination and cyclization of 2-amino-3,7-dideoxy-D-threo-hept-6-ulosonic acid (ADH) to yield 3-dehydroquinate (DHQ), which is fed into the canonical shikimic pathway of aromatic amino acid biosynthesis. In Methanobrevibacter smithii (strain ATCC 35061 / DSM 861 / OCM 144 / PS), this protein is 3-dehydroquinate synthase.